The chain runs to 139 residues: MGETIRFGVSIDEKLLESFDGLIEEKGYMNRSEAIRDLIRAALVELKWEVGDEETVGTVTLVYDHHVRDLSDKLTEQQHAHHDKVISALHVHLDAHNCLEVLVVRGKAREVKKIADELIGVKGVKHGKLVMTTTGEELH.

Ni(2+)-binding residues include histidine 79, histidine 90, histidine 92, and cysteine 98.

Belongs to the transcriptional regulatory CopG/NikR family. Ni(2+) serves as cofactor.

In terms of biological role, transcriptional regulator. The sequence is that of Putative nickel-responsive regulator from Geobacter sulfurreducens (strain ATCC 51573 / DSM 12127 / PCA).